The primary structure comprises 702 residues: Phosphoglycerol transferase I (702 aa).

The next 3 membrane-spanning stretches (helical) occupy residues 3 to 25 (WILA…LAWL), 73 to 95 (GYIA…LRVR), and 102 to 124 (GGGA…SPLY).

It belongs to the OpgB family.

The protein localises to the cell inner membrane. It catalyses the reaction a phosphatidylglycerol + a membrane-derived-oligosaccharide D-glucose = a 1,2-diacyl-sn-glycerol + a membrane-derived-oligosaccharide 6-(glycerophospho)-D-glucose.. It functions in the pathway glycan metabolism; osmoregulated periplasmic glucan (OPG) biosynthesis. In terms of biological role, transfers a phosphoglycerol residue from phosphatidylglycerol to the membrane-bound nascent glucan backbones. The protein is Phosphoglycerol transferase I of Xanthomonas campestris pv. campestris (strain ATCC 33913 / DSM 3586 / NCPPB 528 / LMG 568 / P 25).